Here is a 298-residue protein sequence, read N- to C-terminus: ATP phosphoribosyltransferase (298 aa).

The protein belongs to the ATP phosphoribosyltransferase family. Long subfamily. It depends on Mg(2+) as a cofactor.

The protein localises to the cytoplasm. The enzyme catalyses 1-(5-phospho-beta-D-ribosyl)-ATP + diphosphate = 5-phospho-alpha-D-ribose 1-diphosphate + ATP. The protein operates within amino-acid biosynthesis; L-histidine biosynthesis; L-histidine from 5-phospho-alpha-D-ribose 1-diphosphate: step 1/9. With respect to regulation, feedback inhibited by histidine. Catalyzes the condensation of ATP and 5-phosphoribose 1-diphosphate to form N'-(5'-phosphoribosyl)-ATP (PR-ATP). Has a crucial role in the pathway because the rate of histidine biosynthesis seems to be controlled primarily by regulation of HisG enzymatic activity. The sequence is that of ATP phosphoribosyltransferase from Aliivibrio fischeri (strain ATCC 700601 / ES114) (Vibrio fischeri).